A 394-amino-acid chain; its full sequence is Elongation factor Tu 1 (394 aa).

The region spanning K9 to T204 is the tr-type G domain. Positions G18–T25 are G1. G18–T25 provides a ligand contact to GTP. T25 contacts Mg(2+). The segment at G61–Q65 is G2. Residues D82–G85 form a G3 region. Residues D82–H86 and N137–D140 contribute to the GTP site. Positions N137 to D140 are G4. The interval S174 to L176 is G5.

The protein belongs to the TRAFAC class translation factor GTPase superfamily. Classic translation factor GTPase family. EF-Tu/EF-1A subfamily. Monomer.

It localises to the cytoplasm. It carries out the reaction GTP + H2O = GDP + phosphate + H(+). Functionally, GTP hydrolase that promotes the GTP-dependent binding of aminoacyl-tRNA to the A-site of ribosomes during protein biosynthesis. In Orientia tsutsugamushi (strain Boryong) (Rickettsia tsutsugamushi), this protein is Elongation factor Tu 1.